The following is a 397-amino-acid chain: 3-ketoacyl-CoA thiolase, mitochondrial (397 aa).

A mitochondrion; not cleaved-targeting transit peptide spans methionine 1–proline 16. Position 25 is an N6-acetyllysine; alternate (lysine 25). Lysine 25 is modified (N6-succinyllysine; alternate). The residue at position 45 (lysine 45) is an N6-succinyllysine. Cysteine 92 serves as the catalytic Acyl-thioester intermediate. Threonine 119 is subject to Phosphothreonine. The residue at position 121 (serine 121) is a Phosphoserine. Phosphotyrosine is present on tyrosine 127. At threonine 136 the chain carries Phosphothreonine. 6 positions are modified to N6-acetyllysine; alternate: lysine 137, lysine 143, lysine 158, lysine 171, lysine 191, and lysine 209. Residues lysine 137, lysine 143, lysine 158, lysine 171, lysine 191, and lysine 209 each carry the N6-succinyllysine; alternate modification. 3 positions are modified to N6-succinyllysine: lysine 211, lysine 212, and lysine 214. The CoA site is built by arginine 224 and threonine 227. Lysine 240 is modified (N6-succinyllysine). Lysine 241 bears the N6-acetyllysine mark. Serine 251 lines the CoA pocket. N6-acetyllysine occurs at positions 269 and 270. Lysine 305 carries the post-translational modification N6-acetyllysine; alternate. An N6-succinyllysine; alternate modification is found at lysine 305. Serine 310 is modified (phosphoserine). Residue lysine 312 is modified to N6-acetyllysine; alternate. Lysine 312 carries the N6-succinyllysine; alternate modification. The residue at position 333 (serine 333) is a Phosphoserine. Lysine 340 is modified (N6-acetyllysine). Position 344 is a phosphoserine (serine 344). Lysine 375 is subject to N6-acetyllysine. Cysteine 382 serves as the catalytic Proton donor/acceptor.

The protein belongs to the thiolase-like superfamily. Thiolase family. Homotetramer. Interacts with BNIP3. As to expression, expressed in liver, brown adipose tissue and heart (at protein level).

The protein resides in the mitochondrion. The enzyme catalyses an acyl-CoA + acetyl-CoA = a 3-oxoacyl-CoA + CoA. It carries out the reaction 2 acetyl-CoA = acetoacetyl-CoA + CoA. The catalysed reaction is acetyl-CoA + H2O = acetate + CoA + H(+). It catalyses the reaction propanoyl-CoA + H2O = propanoate + CoA + H(+). The enzyme catalyses butanoyl-CoA + H2O = butanoate + CoA + H(+). It carries out the reaction hexanoyl-CoA + H2O = hexanoate + CoA + H(+). The catalysed reaction is octanoyl-CoA + H2O = octanoate + CoA + H(+). It catalyses the reaction decanoyl-CoA + H2O = decanoate + CoA + H(+). The enzyme catalyses dodecanoyl-CoA + H2O = dodecanoate + CoA + H(+). It carries out the reaction tetradecanoyl-CoA + H2O = tetradecanoate + CoA + H(+). The catalysed reaction is hexadecanoyl-CoA + H2O = hexadecanoate + CoA + H(+). It functions in the pathway lipid metabolism; fatty acid beta-oxidation. Its activity is regulated as follows. The 3-oxoacetyl-CoA thiolase activity is inhibited by acetyl-CoA while the acetyl-CoA hydrolase activity is inhibited by acetoacetyl-CoA. Its function is as follows. In the production of energy from fats, this is one of the enzymes that catalyzes the last step of the mitochondrial beta-oxidation pathway, an aerobic process breaking down fatty acids into acetyl-CoA. Using free coenzyme A/CoA, catalyzes the thiolytic cleavage of medium- to long-chain unbranched 3-oxoacyl-CoAs into acetyl-CoA and a fatty acyl-CoA shortened by two carbon atoms. Also catalyzes the condensation of two acetyl-CoA molecules into acetoacetyl-CoA and could be involved in the production of ketone bodies. Also displays hydrolase activity on various fatty acyl-CoAs. Thereby, could be responsible for the production of acetate in a side reaction to beta-oxidation. Abolishes BNIP3-mediated apoptosis and mitochondrial damage. This chain is 3-ketoacyl-CoA thiolase, mitochondrial (Acaa2), found in Rattus norvegicus (Rat).